We begin with the raw amino-acid sequence, 441 residues long: Putative F-box protein At1g33530 (441 aa).

An F-box domain is found at 91 to 137 (TTLAVELPDVLVEEILQRLPVKYLVRLKSISKGWKSLIESDHLAEKH).

The polypeptide is Putative F-box protein At1g33530 (Arabidopsis thaliana (Mouse-ear cress)).